Reading from the N-terminus, the 128-residue chain is Ribonuclease pancreatic (128 aa).

Residues 1-13 (GESRAEKFQRQHM) are compositionally biased toward basic and acidic residues. Residues 1-24 (GESRAEKFQRQHMDSGSSPSSSST) are disordered. Residues lysine 7 and arginine 10 each coordinate substrate. Histidine 12 functions as the Proton acceptor in the catalytic mechanism. 4 cysteine pairs are disulfide-bonded: cysteine 26–cysteine 84, cysteine 40–cysteine 95, cysteine 58–cysteine 110, and cysteine 65–cysteine 72. Residue asparagine 34 is glycosylated (N-linked (GlcNAc...) asparagine). Substrate-binding positions include 41–45 (KSVNT), lysine 66, and arginine 85. The Proton donor role is filled by histidine 119.

The protein belongs to the pancreatic ribonuclease family. As to quaternary structure, monomer. Interacts with and forms tight 1:1 complexes with RNH1. Dimerization of two such complexes may occur. Interaction with RNH1 inhibits this protein. In terms of tissue distribution, pancreas and other tissues and body fluids (indicating it may have other physiological functions besides its role in digestion).

Its subcellular location is the secreted. The catalysed reaction is an [RNA] containing cytidine + H2O = an [RNA]-3'-cytidine-3'-phosphate + a 5'-hydroxy-ribonucleotide-3'-[RNA].. It catalyses the reaction an [RNA] containing uridine + H2O = an [RNA]-3'-uridine-3'-phosphate + a 5'-hydroxy-ribonucleotide-3'-[RNA].. Functionally, endonuclease that catalyzes the cleavage of RNA on the 3' side of pyrimidine nucleotides. Acts on single-stranded and double-stranded RNA. This Semnopithecus entellus (Northern plains gray langur) protein is Ribonuclease pancreatic (RNASE1).